Here is a 120-residue protein sequence, read N- to C-terminus: NAD(P)H-quinone oxidoreductase subunit 3, chloroplastic (120 aa).

3 helical membrane passes run 7 to 27 (YQTFWVFIMISSLIPLLALLI), 64 to 84 (SFALVFVIFDVETVFLYPWAM), and 89 to 109 (LGIFAFIEALIFVFILIIGLV).

It belongs to the complex I subunit 3 family. In terms of assembly, NDH is composed of at least 16 different subunits, 5 of which are encoded in the nucleus.

It localises to the plastid. Its subcellular location is the chloroplast thylakoid membrane. The enzyme catalyses a plastoquinone + NADH + (n+1) H(+)(in) = a plastoquinol + NAD(+) + n H(+)(out). The catalysed reaction is a plastoquinone + NADPH + (n+1) H(+)(in) = a plastoquinol + NADP(+) + n H(+)(out). Functionally, NDH shuttles electrons from NAD(P)H:plastoquinone, via FMN and iron-sulfur (Fe-S) centers, to quinones in the photosynthetic chain and possibly in a chloroplast respiratory chain. The immediate electron acceptor for the enzyme in this species is believed to be plastoquinone. Couples the redox reaction to proton translocation, and thus conserves the redox energy in a proton gradient. This is NAD(P)H-quinone oxidoreductase subunit 3, chloroplastic from Psilotum nudum (Whisk fern).